The following is a 132-amino-acid chain: Inclusion membrane protein E (132 aa).

2 helical membrane-spanning segments follow: residues 41–61 (LGVV…AVGV) and 66–86 (FALG…ATSA).

Its subcellular location is the secreted. It localises to the host vacuole. It is found in the host pathogen-containing vacuole. The protein resides in the host pathogen-containing vacuole membrane. In terms of biological role, inclusion membrane protein probably involved in early modification events of the chlamydial inclusion. In Chlamydia trachomatis serovar L2 (strain ATCC VR-902B / DSM 19102 / 434/Bu), this protein is Inclusion membrane protein E.